Consider the following 668-residue polypeptide: UvrABC system protein B (668 aa).

The Helicase ATP-binding domain occupies 31–416 (QGITDGVPAQ…RGHIIEQIIR (386 aa)). 44–51 (GTTGSGKT) contributes to the ATP binding site. Positions 97-120 (YYDYYQPEAYIARSDTYIEKSLLI) match the Beta-hairpin motif. One can recognise a Helicase C-terminal domain in the interval 433–596 (QIDDLLEEIR…ITPQPIIKPI (164 aa)). The region spanning 621–656 (EASIKTYEEAMYQAAQEFQFDEAVKYRDLMNAAKKQ) is the UVR domain.

This sequence belongs to the UvrB family. In terms of assembly, forms a heterotetramer with UvrA during the search for lesions. Interacts with UvrC in an incision complex.

The protein localises to the cytoplasm. Functionally, the UvrABC repair system catalyzes the recognition and processing of DNA lesions. A damage recognition complex composed of 2 UvrA and 2 UvrB subunits scans DNA for abnormalities. Upon binding of the UvrA(2)B(2) complex to a putative damaged site, the DNA wraps around one UvrB monomer. DNA wrap is dependent on ATP binding by UvrB and probably causes local melting of the DNA helix, facilitating insertion of UvrB beta-hairpin between the DNA strands. Then UvrB probes one DNA strand for the presence of a lesion. If a lesion is found the UvrA subunits dissociate and the UvrB-DNA preincision complex is formed. This complex is subsequently bound by UvrC and the second UvrB is released. If no lesion is found, the DNA wraps around the other UvrB subunit that will check the other stand for damage. This is UvrABC system protein B from Chlamydia trachomatis serovar A (strain ATCC VR-571B / DSM 19440 / HAR-13).